Reading from the N-terminus, the 555-residue chain is Inositol 1,4,5-triphosphate receptor associated 2 (555 aa).

Residues 1–495 are Cytoplasmic-facing; it reads MESTPFSGVA…LKSSIRKANK (495 aa). 2 disordered regions span residues 84–103 and 128–147; these read SLPL…SSDP and RSAS…DNIA. At threonine 91 the chain carries Phosphothreonine. Residues 91-102 show a composition bias toward low complexity; the sequence is TSSTDGTITSSD. A compositionally biased stretch (polar residues) spans 129-142; it reads SASPTIEAQGTSPA. Residues 227–341 adopt a coiled-coil conformation; the sequence is TLEKRVKLEE…LEELKQVLLQ (115 aa). Serine 363, serine 370, and serine 424 each carry phosphoserine. A disordered region spans residues 437–469; the sequence is ELKTKDDSEPSGEETVERTRKPSLSEKKNNPSK. Over residues 451–465 the composition is skewed to basic and acidic residues; that stretch reads TVERTRKPSLSEKKN. The helical; Anchor for type IV membrane protein transmembrane segment at 496–516 threads the bilayer; sequence ALWLSIAFIVLFAALMSFLTG. Over 517-555 the chain is Lumenal; that stretch reads QLFQKSVDAAPTQQEDSWTSLEHILWPFTRLRHNGPPPV.

Belongs to the IRAG2 family. Interacts (via coiled-coil domain) with ITPR3. Interacts with SUN1 and SUN2. Interacts with microtubules. Interacts with HCN4; regulates HCN4 channel activity. The removal of the C-terminal lumenal domain occurs by proteolytic processing. In terms of tissue distribution, expressed at high levels in pre B-cells, mature B-cells and pre T-cells. Expressed at low levels in mature T-cells and plasma B-cells. Expressed in germinal center B-cells, splenic marginal zone cells and B-cell lymphomas. Expressed in neuronal cells in the cerebral cortex, epithelial cells in tonsil, adrenal glands, zymogen-producing cells in the stomach and epithelial cells in seminal vesicles.

The protein localises to the cytoplasm. It is found in the endoplasmic reticulum membrane. Its subcellular location is the nucleus envelope. It localises to the cytoskeleton. The protein resides in the microtubule organizing center. The protein localises to the centrosome. It is found in the spindle pole. Its subcellular location is the chromosome. Plays a role in the delivery of peptides to major histocompatibility complex (MHC) class I molecules; this occurs in a transporter associated with antigen processing (TAP)-independent manner. May play a role in taste signal transduction via ITPR3. May play a role during fertilization in pronucleus congression and fusion. Plays a role in maintaining nuclear shape, maybe as a component of the LINC complex and through interaction with microtubules. Plays a role in the regulation of cellular excitability by regulating the hyperpolarization-activated cyclic nucleotide-gated HCN4 channel activity. The polypeptide is Inositol 1,4,5-triphosphate receptor associated 2 (Homo sapiens (Human)).